The sequence spans 465 residues: Light-independent protochlorophyllide reductase subunit N (465 aa).

Residues C22, C47, and C107 each coordinate [4Fe-4S] cluster.

It belongs to the BchN/ChlN family. In terms of assembly, protochlorophyllide reductase is composed of three subunits; ChlL, ChlN and ChlB. Forms a heterotetramer of two ChlB and two ChlN subunits. It depends on [4Fe-4S] cluster as a cofactor.

Its subcellular location is the plastid. It is found in the chloroplast. The catalysed reaction is chlorophyllide a + oxidized 2[4Fe-4S]-[ferredoxin] + 2 ADP + 2 phosphate = protochlorophyllide a + reduced 2[4Fe-4S]-[ferredoxin] + 2 ATP + 2 H2O. Its pathway is porphyrin-containing compound metabolism; chlorophyll biosynthesis (light-independent). Functionally, component of the dark-operative protochlorophyllide reductase (DPOR) that uses Mg-ATP and reduced ferredoxin to reduce ring D of protochlorophyllide (Pchlide) to form chlorophyllide a (Chlide). This reaction is light-independent. The NB-protein (ChlN-ChlB) is the catalytic component of the complex. In Marchantia polymorpha (Common liverwort), this protein is Light-independent protochlorophyllide reductase subunit N.